The primary structure comprises 71 residues: MFTSKKPLLLLFFLGTINLSLCEQERDADEEERRDDPDERDVEVEKRFLPLIASLAANFVPKIFCKITKKC.

An N-terminal signal peptide occupies residues 1-22 (MFTSKKPLLLLFFLGTINLSLC). Residues 23–45 (EQERDADEEERRDDPDERDVEVE) constitute a propeptide that is removed on maturation. Cys65 and Cys71 are joined by a disulfide.

In terms of tissue distribution, expressed by the skin glands.

It localises to the secreted. Functionally, has antimicrobial activity against Gram-positive bacteria and fungi but has weak or no activity against a range of Gram-negative bacteria except P.faecalis. Active against the Gram-positive bacteria E.faecium 091299 (MIC=19 uM), E.faecalis 981 (MIC=19 uM), S.aureus ATCC 25923 (MIC=1.2 uM), S.carnosus KHS (MIC=4.8 uM), B.licheniformis X39 (MIC=2.4 uM) and R.rhodochrous X15 (MIC=1.2 uM). Active against the Gram-negative bacterium P.faecalis X29 (MIC=4.8 uM), is virtually inactive against E.coli ATCC 25922 (MIC=150 uM) and inactive against P.aeruginosa and S.typhi. Has antifungal activity against C.albicans ATCC 2002 (MIC=2.4 uM) and is also active against the slime mold 090223 (MIC=1.2 uM). Has low hemolytic activity against human erythrocytes (LC(50)=75 uM). The polypeptide is Brevinin-1HN1 (Odorrana hainanensis (Odor frog)).